The chain runs to 712 residues: MTTQITYFATAARGFEEMLKTELEQICQAECKVAQGGVHFTTTQRGAYQALLHSRLASRILLPLVTTKIFSDLDLYATIVGINWAEIFDPRDTFFVDFNGTNREIRNTQFGAMRVKDGVVDYFERKGFARPTVDKDHADIRIHVYLDRENMVVSLDLSGDALHMRGYREDTGKAPLRETLAAAIVLRSGWQKGTPLVDPMCGSGTLLIEAAQMQAGIAPQLHRKHWGFNAWKGHQQAVWKEVLEQAYLQQNEEIQPLFFGFDLDHRVLAKAKQNAKNAGVAHLIQWQQGDIAALKNPCPNQVGTVICNPPYGERLGTTPALIALYSVFGQRLKQQFSGWNASIFSGEPELLNCLRLRSHRQFKAKNGPLDCLQKNYQISERTAAEQQADELKFEQNAQVAPDFANRLAKNIKKIEKWAKQQGINAYRLYDADLPEYNLAVDRYDDHIVVQEYAAPKNIDEQKARQRLLDAVSATLYVTGVETNKLVLKVRQKQKGTNQYEKLANKGDYFYVTEYGAKLWVNLTDYLDTGLFLDHRLTRKMVGQMAKGKTFLNLFAYTGSATIHAALNGAKSTTTVDMSNTYLNWAEQNLELNNLPLRNNRLFQADCLQWLAECRERFELIFVDPPTFSNSKRMEDSWDVQRDHIKLMTQLKRILTTDGTIVFSNNKRGFKMDFEGLAELGLQAENISHKTLPLDFERNPQIHNCWIIRHIEN.

Residues 46-157 enclose the THUMP domain; it reads GAYQALLHSR…RENMVVSLDL (112 aa).

The protein belongs to the methyltransferase superfamily. RlmKL family.

The protein localises to the cytoplasm. The enzyme catalyses guanosine(2445) in 23S rRNA + S-adenosyl-L-methionine = N(2)-methylguanosine(2445) in 23S rRNA + S-adenosyl-L-homocysteine + H(+). The catalysed reaction is guanosine(2069) in 23S rRNA + S-adenosyl-L-methionine = N(2)-methylguanosine(2069) in 23S rRNA + S-adenosyl-L-homocysteine + H(+). In terms of biological role, specifically methylates the guanine in position 2445 (m2G2445) and the guanine in position 2069 (m7G2069) of 23S rRNA. This chain is Ribosomal RNA large subunit methyltransferase K/L, found in Actinobacillus pleuropneumoniae serotype 3 (strain JL03).